The primary structure comprises 116 residues: T-cell leukemia/lymphoma protein 1A (116 aa).

It belongs to the TCL1 family. In terms of assembly, homodimer. Interacts with AKT1, AKT2 and AKT3 (via PH domain). Interacts with PNPT1; the interaction has no effect on PNPT1 exonuclease activity.

The protein localises to the cytoplasm. The protein resides in the nucleus. Its subcellular location is the microsome. It localises to the endoplasmic reticulum. In terms of biological role, enhances the phosphorylation and activation of AKT1 and AKT2. Enhances cell proliferation, stabilizes mitochondrial membrane potential and promotes cell survival. The polypeptide is T-cell leukemia/lymphoma protein 1A (Tcl1a) (Mus musculus (Mouse)).